Here is a 541-residue protein sequence, read N- to C-terminus: Chaperonin GroEL (541 aa).

ATP-binding positions include 29–32 (TLGP), 86–90 (DGTTT), glycine 413, 476–478 (NAA), and aspartate 492.

Belongs to the chaperonin (HSP60) family. In terms of assembly, forms a cylinder of 14 subunits composed of two heptameric rings stacked back-to-back. Interacts with the co-chaperonin GroES.

It localises to the cytoplasm. The enzyme catalyses ATP + H2O + a folded polypeptide = ADP + phosphate + an unfolded polypeptide.. Functionally, together with its co-chaperonin GroES, plays an essential role in assisting protein folding. The GroEL-GroES system forms a nano-cage that allows encapsulation of the non-native substrate proteins and provides a physical environment optimized to promote and accelerate protein folding. The polypeptide is Chaperonin GroEL (Streptococcus equi subsp. equi (strain 4047)).